We begin with the raw amino-acid sequence, 446 residues long: Glutamate--tRNA ligase 2 (446 aa).

Positions 8 to 18 (PSPTGYLHIGN) match the 'HIGH' region motif. Positions 239 to 243 (GLSKR) match the 'KMSKS' region motif. Lys242 lines the ATP pocket.

This sequence belongs to the class-I aminoacyl-tRNA synthetase family. Glutamate--tRNA ligase type 1 subfamily. As to quaternary structure, monomer.

The protein localises to the cytoplasm. It carries out the reaction tRNA(Glu) + L-glutamate + ATP = L-glutamyl-tRNA(Glu) + AMP + diphosphate. In terms of biological role, catalyzes the attachment of glutamate to tRNA(Glu) in a two-step reaction: glutamate is first activated by ATP to form Glu-AMP and then transferred to the acceptor end of tRNA(Glu). In Methylobacterium radiotolerans (strain ATCC 27329 / DSM 1819 / JCM 2831 / NBRC 15690 / NCIMB 10815 / 0-1), this protein is Glutamate--tRNA ligase 2.